Reading from the N-terminus, the 116-residue chain is Large ribosomal subunit protein bL19 (116 aa).

Belongs to the bacterial ribosomal protein bL19 family.

Its function is as follows. This protein is located at the 30S-50S ribosomal subunit interface and may play a role in the structure and function of the aminoacyl-tRNA binding site. The chain is Large ribosomal subunit protein bL19 from Mycoplasma mobile (strain ATCC 43663 / 163K / NCTC 11711) (Mesomycoplasma mobile).